The sequence spans 449 residues: UDP-N-acetylmuramoylalanine--D-glutamate ligase (449 aa).

118 to 124 (GTNGKTT) provides a ligand contact to ATP.

It belongs to the MurCDEF family.

The protein resides in the cytoplasm. The catalysed reaction is UDP-N-acetyl-alpha-D-muramoyl-L-alanine + D-glutamate + ATP = UDP-N-acetyl-alpha-D-muramoyl-L-alanyl-D-glutamate + ADP + phosphate + H(+). It functions in the pathway cell wall biogenesis; peptidoglycan biosynthesis. Its function is as follows. Cell wall formation. Catalyzes the addition of glutamate to the nucleotide precursor UDP-N-acetylmuramoyl-L-alanine (UMA). The chain is UDP-N-acetylmuramoylalanine--D-glutamate ligase from Staphylococcus haemolyticus (strain JCSC1435).